The primary structure comprises 33 residues: Cytochrome b6-f complex subunit 8 (33 aa).

A helical transmembrane segment spans residues leucine 2 to valine 22.

Belongs to the PetN family. The 4 large subunits of the cytochrome b6-f complex are cytochrome b6, subunit IV (17 kDa polypeptide, PetD), cytochrome f and the Rieske protein, while the 4 small subunits are PetG, PetL, PetM and PetN. The complex functions as a dimer.

The protein resides in the cellular thylakoid membrane. In terms of biological role, component of the cytochrome b6-f complex, which mediates electron transfer between photosystem II (PSII) and photosystem I (PSI), cyclic electron flow around PSI, and state transitions. The polypeptide is Cytochrome b6-f complex subunit 8 (Prochlorococcus marinus (strain MIT 9211)).